A 116-amino-acid chain; its full sequence is Large ribosomal subunit protein bL19 (116 aa).

The protein belongs to the bacterial ribosomal protein bL19 family.

Functionally, this protein is located at the 30S-50S ribosomal subunit interface and may play a role in the structure and function of the aminoacyl-tRNA binding site. This chain is Large ribosomal subunit protein bL19, found in Nocardioides sp. (strain ATCC BAA-499 / JS614).